Consider the following 424-residue polypeptide: Zinc metalloproteinase-disintegrin-like brevilysin H2a (424 aa).

Glutamine 1 carries the pyrrolidone carboxylic acid modification. The region spanning 9–207 (RYVKLAIVAD…YKPQCILNEP (199 aa)) is the Peptidase M12B domain. An N-linked (GlcNAc...) asparagine glycan is attached at asparagine 69. Aspartate 96 is a Ca(2+) binding site. Cystine bridges form between cysteine 120–cysteine 202, cysteine 164–cysteine 186, and cysteine 166–cysteine 169. Histidine 145 lines the Zn(2+) pocket. Glutamate 146 is a catalytic residue. Residues histidine 149 and histidine 155 each coordinate Zn(2+). N-linked (GlcNAc...) asparagine glycosylation is present at asparagine 185. Ca(2+) is bound by residues cysteine 202, asparagine 205, valine 217, asparagine 220, leucine 222, glutamate 224, glutamate 227, and aspartate 230. One can recognise a Disintegrin domain in the interval 215 to 301 (PPVCGNELLE…DCPTDDLQRN (87 aa)). Intrachain disulfides connect cysteine 218-cysteine 247, cysteine 229-cysteine 242, cysteine 231-cysteine 237, cysteine 241-cysteine 264, cysteine 255-cysteine 261, cysteine 260-cysteine 286, cysteine 273-cysteine 293, cysteine 280-cysteine 312, cysteine 305-cysteine 317, cysteine 324-cysteine 374, cysteine 339-cysteine 385, cysteine 352-cysteine 362, cysteine 369-cysteine 411, and cysteine 405-cysteine 417. Residues 279 to 281 (DCD) carry the D/ECD-tripeptide motif. Ca(2+) contacts are provided by aspartate 281, glutamate 284, and aspartate 296. N-linked (GlcNAc...) asparagine glycosylation occurs at asparagine 331.

Belongs to the venom metalloproteinase (M12B) family. P-III subfamily. P-IIIa sub-subfamily. In terms of assembly, monomer. Zn(2+) serves as cofactor. Glycosylated. In terms of tissue distribution, expressed by the venom gland.

Its subcellular location is the secreted. Its activity is regulated as follows. Its proteolytic activity is inhibited by EDTA, TPEN, 1,10-phenanthroline, and some thiol compounds, but is enhanced by alkaline earth metal ions (Mg2+, Ca2+, Sr2+, and Ba2+). Its activity is not modulated by urea (4 M). Functionally, non-hemorrhagic metalloproteinase that degrades fibrinogen. The alpha chain (FGA) is rapidly degraded, the beta chain (FGB) is degraded very slowly, while the gamma chain is left intact. Shows a prefential cleavage at X-Leu bonds. Cleaves insulin B chain at '29-His-|-Leu-30', '33-Ser-|-His-34', '38-Ala-|-Leu-39' and '40-Tyr-|-Leu-41' bonds. The protein is Zinc metalloproteinase-disintegrin-like brevilysin H2a of Gloydius brevicauda (Korean slamosa snake).